Consider the following 323-residue polypeptide: Cytoskeleton protein RodZ (323 aa).

Topologically, residues 1–111 (MNTEASQDKT…LGKRRKKRDG (111 aa)) are cytoplasmic. One can recognise an HTH cro/C1-type domain in the interval 19 to 71 (LRQAREQLGLSQQAVAERLCLKMSTVRDIEEDNLSADLASTFVRGYIRSYAKL). Positions 30–49 (QQAVAERLCLKMSTVRDIEE) form a DNA-binding region, H-T-H motif. Residues 112-132 (WLMSFTWLIVFVVVGLTGAWW) traverse the membrane as a helical; Signal-anchor for type II membrane protein segment. At 133-323 (WQNHKAQQEE…RVARLTVAAQ (191 aa)) the chain is on the periplasmic side. 2 stretches are compositionally biased toward polar residues: residues 149–172 (QSSA…NADN) and 179–214 (NGST…SPSQ). The disordered stretch occupies residues 149-236 (QSSAQLSQNN…APLPTADAGV (88 aa)). Residues 215–234 (TTLPETTPAAPTAPLPTADA) show a composition bias toward low complexity.

Belongs to the RodZ family.

The protein localises to the cell inner membrane. Cytoskeletal protein that is involved in cell-shape control through regulation of the length of the long axis. This chain is Cytoskeleton protein RodZ, found in Serratia proteamaculans (strain 568).